We begin with the raw amino-acid sequence, 527 residues long: UDP-glucuronosyltransferase 2A1 (527 aa).

The N-terminal stretch at 1–20 is a signal peptide; sequence MLKNILLWSLQLSLLGMSLG. Residues 21–490 lie on the Extracellular side of the membrane; that stretch reads GNVLIWPMEG…LSWFQYHSLD (470 aa). A glycan (N-linked (GlcNAc...) asparagine) is linked at Asn-49. Residue Lys-134 is modified to N6-succinyllysine. A glycan (N-linked (GlcNAc...) asparagine) is linked at Asn-313. A helical transmembrane segment spans residues 491-507; that stretch reads VIGFLLACMASAILLVI. At 508–527 the chain is on the cytoplasmic side; it reads KCCLFVFQKIGKTXKKNKRD.

Belongs to the UDP-glycosyltransferase family. As to expression, olfactory epithelium. Mainly found in the sustentacular cells and to a lesser extent in Bowman's gland cells. Also expressed in the olfactory sensory neuron nuclei. Neuronal localization within the olfactory bulb is mainly found in the deeper granular cells.

The protein localises to the membrane. The enzyme catalyses glucuronate acceptor + UDP-alpha-D-glucuronate = acceptor beta-D-glucuronoside + UDP + H(+). It carries out the reaction 16beta,17beta-estriol + UDP-alpha-D-glucuronate = 16beta,17beta-estriol 16-O-(beta-D-glucuronate) + UDP + H(+). The catalysed reaction is 16alpha,17alpha-estriol + UDP-alpha-D-glucuronate = 16alpha,17alpha-estriol 16-O-(beta-D-glucuronate) + UDP + H(+). It catalyses the reaction 17alpha-estradiol + UDP-alpha-D-glucuronate = 17alpha-estradiol 17-O-(beta-D-glucuronate) + UDP + H(+). The enzyme catalyses 17alpha-estradiol + UDP-alpha-D-glucuronate = 17alpha-estradiol 3-O-(beta-D-glucuronate) + UDP + H(+). It carries out the reaction 17beta-estradiol + UDP-alpha-D-glucuronate = 17beta-estradiol 3-O-(beta-D-glucuronate) + UDP + H(+). The catalysed reaction is 17beta-estradiol + UDP-alpha-D-glucuronate = 17beta-estradiol 17-O-(beta-D-glucuronate) + UDP + H(+). It catalyses the reaction testosterone + UDP-alpha-D-glucuronate = testosterone 17-O-(beta-D-glucuronate) + UDP + H(+). The enzyme catalyses epitestosterone + UDP-alpha-D-glucuronate = epitestosterone 17-O-(beta-D-glucuronate) + UDP + H(+). It carries out the reaction lithocholate + UDP-alpha-D-glucuronate = lithocholoyl-3-O-(beta-D-glucuronate) + UDP + H(+). The catalysed reaction is lithocholate + UDP-alpha-D-glucuronate = lithocholoyl-24-O-(beta-D-glucuronate) + UDP. It catalyses the reaction deoxycholate + UDP-alpha-D-glucuronate = deoxycholoyl-24-O-(beta-D-glucuronate) + UDP. The enzyme catalyses hyodeoxycholate + UDP-alpha-D-glucuronate = hyodeoxycholate 6-O-(beta-D-glucuronate) + UDP + H(+). It carries out the reaction hyocholate + UDP-alpha-D-glucuronate = hyocholoyl-24-O-(beta-D-glucuronate) + UDP. Functionally, UDP-glucuronosyltransferase (UGT) that catalyzes phase II biotransformation reactions in which lipophilic substrates are conjugated with glucuronic acid to increase the metabolite's water solubility, thereby facilitating excretion into either the urine or bile. Essential for the elimination and detoxification of drugs, xenobiotics and endogenous compounds. Catalyzes the glucuronidation of endogenous steroid hormones such as androgens (testosterones) and estrogens (estradiol and estriol). Contributes to bile acid (BA) detoxification by catalyzing the glucuronidation of BA substrates, which are natural detergents for dietary lipids absorption. Shows a high affinity to aliphatic odorants such as citronellol as well as olfactory tissue specificity, and therefore may be involved in olfaction. The protein is UDP-glucuronosyltransferase 2A1 of Rattus norvegicus (Rat).